The primary structure comprises 312 residues: D-alanine--D-alanine ligase (312 aa).

Residues 108–308 form the ATP-grasp domain; the sequence is KLVWQQTGIP…YSELVVKVLS (201 aa). 138 to 193 provides a ligand contact to ATP; that stretch reads VAKLGVPLFVKPASEGSSVAVEKVKSADALPAALEEAAKHDKIVIVEKSIEGGGEY. The Mg(2+) site is built by Asp262, Glu275, and Asn277.

Belongs to the D-alanine--D-alanine ligase family. The cofactor is Mg(2+). Mn(2+) is required as a cofactor.

It is found in the cytoplasm. It carries out the reaction 2 D-alanine + ATP = D-alanyl-D-alanine + ADP + phosphate + H(+). It functions in the pathway cell wall biogenesis; peptidoglycan biosynthesis. In terms of biological role, cell wall formation. This chain is D-alanine--D-alanine ligase, found in Burkholderia mallei (strain NCTC 10247).